Consider the following 407-residue polypeptide: FK506-binding protein 3 (407 aa).

Disordered stretches follow at residues 46-136 (RIEG…DDEG), 191-223 (DEDE…EDEV), and 236-297 (QDDE…PKLV). Acidic residues-rich tracts occupy residues 65-88 (NFDD…EVSA) and 103-136 (DGLD…DDEG). The segment covering 236–252 (QDDEDDEDDEDEEEEPV) has biased composition (acidic residues). A compositionally biased stretch (basic and acidic residues) spans 253–272 (VEPKKILKRAAEEKKQEKAA). The PPIase FKBP-type domain occupies 321–407 (GSKVGVRYVG…TFDVKVVNIK (87 aa)).

The protein belongs to the FKBP-type PPIase family. FKBP3/4 subfamily.

The protein resides in the nucleus. It is found in the nucleolus. The enzyme catalyses [protein]-peptidylproline (omega=180) = [protein]-peptidylproline (omega=0). With respect to regulation, inhibited by both FK506 and rapamycin. PPIases accelerate the folding of proteins. It catalyzes the cis-trans isomerization of proline imidic peptide bonds in oligopeptides. This chain is FK506-binding protein 3 (FPR3), found in Yarrowia lipolytica (strain CLIB 122 / E 150) (Yeast).